We begin with the raw amino-acid sequence, 345 residues long: GDSL esterase/lipase At1g23500 (345 aa).

The N-terminal stretch at 1–24 (MNFSLLSTMLMALSSVCLFFVGYA) is a signal peptide. Residue S42 is the Nucleophile of the active site. N103 carries N-linked (GlcNAc...) asparagine glycosylation. Catalysis depends on residues D320 and H323.

This sequence belongs to the 'GDSL' lipolytic enzyme family.

The protein localises to the secreted. The chain is GDSL esterase/lipase At1g23500 from Arabidopsis thaliana (Mouse-ear cress).